The sequence spans 257 residues: Thiazole synthase (257 aa).

Lys95 (schiff-base intermediate with DXP) is an active-site residue. 1-deoxy-D-xylulose 5-phosphate-binding positions include Gly156, Ala182–Gly183, and Asn204–Thr205.

The protein belongs to the ThiG family. Homotetramer. Forms heterodimers with either ThiH or ThiS.

Its subcellular location is the cytoplasm. The catalysed reaction is [ThiS sulfur-carrier protein]-C-terminal-Gly-aminoethanethioate + 2-iminoacetate + 1-deoxy-D-xylulose 5-phosphate = [ThiS sulfur-carrier protein]-C-terminal Gly-Gly + 2-[(2R,5Z)-2-carboxy-4-methylthiazol-5(2H)-ylidene]ethyl phosphate + 2 H2O + H(+). Its pathway is cofactor biosynthesis; thiamine diphosphate biosynthesis. Its function is as follows. Catalyzes the rearrangement of 1-deoxy-D-xylulose 5-phosphate (DXP) to produce the thiazole phosphate moiety of thiamine. Sulfur is provided by the thiocarboxylate moiety of the carrier protein ThiS. In vitro, sulfur can be provided by H(2)S. The protein is Thiazole synthase of Fusobacterium nucleatum subsp. nucleatum (strain ATCC 25586 / DSM 15643 / BCRC 10681 / CIP 101130 / JCM 8532 / KCTC 2640 / LMG 13131 / VPI 4355).